A 385-amino-acid chain; its full sequence is Mannitol-1-phosphate 5-dehydrogenase (385 aa).

Residue 3-14 (ALQFGAGNIGRG) coordinates NAD(+).

The protein belongs to the mannitol dehydrogenase family.

The catalysed reaction is D-mannitol 1-phosphate + NAD(+) = beta-D-fructose 6-phosphate + NADH + H(+). The polypeptide is Mannitol-1-phosphate 5-dehydrogenase (mtlD) (Buchnera aphidicola subsp. Acyrthosiphon pisum (strain APS) (Acyrthosiphon pisum symbiotic bacterium)).